Reading from the N-terminus, the 33-residue chain is Glucagon-2 (33 aa).

This sequence belongs to the glucagon family.

It localises to the secreted. Functionally, promotes hydrolysis of glycogen and lipids, and raises the blood sugar level. This Oreochromis niloticus (Nile tilapia) protein is Glucagon-2 (gcg2).